The primary structure comprises 637 residues: Probable potassium transport system protein Kup (637 aa).

Transmembrane regions (helical) follow at residues 25-45 (ISLA…LYAI), 62-82 (VLGV…LKYL), 115-135 (WFLV…GMIT), 149-169 (IIAP…LTGL), 180-200 (VGAL…VLGL), 227-247 (LQGF…EALY), 263-283 (ILFV…LLLF), 295-315 (LVPS…TIIA), 352-372 (IYVP…VIGF), 378-398 (LAAA…ILFY), 410-430 (LATN…FGAS), and 434-454 (LFHG…LMLT).

It belongs to the HAK/KUP transporter (TC 2.A.72) family.

It localises to the cell inner membrane. The enzyme catalyses K(+)(in) + H(+)(in) = K(+)(out) + H(+)(out). Its function is as follows. Transport of potassium into the cell. Likely operates as a K(+):H(+) symporter. This Chlorobium phaeobacteroides (strain DSM 266 / SMG 266 / 2430) protein is Probable potassium transport system protein Kup.